A 409-amino-acid polypeptide reads, in one-letter code: Gamma-glutamyl phosphate reductase (409 aa).

The protein belongs to the gamma-glutamyl phosphate reductase family.

The protein localises to the cytoplasm. The enzyme catalyses L-glutamate 5-semialdehyde + phosphate + NADP(+) = L-glutamyl 5-phosphate + NADPH + H(+). Its pathway is amino-acid biosynthesis; L-proline biosynthesis; L-glutamate 5-semialdehyde from L-glutamate: step 2/2. Catalyzes the NADPH-dependent reduction of L-glutamate 5-phosphate into L-glutamate 5-semialdehyde and phosphate. The product spontaneously undergoes cyclization to form 1-pyrroline-5-carboxylate. The sequence is that of Gamma-glutamyl phosphate reductase from Koribacter versatilis (strain Ellin345).